Here is a 361-residue protein sequence, read N- to C-terminus: Serine/threonine-protein kinase SRK2I (361 aa).

The Protein kinase domain maps to 22 to 278 (YDFVKDIGSG…IPEIKTHSWF (257 aa)). ATP contacts are provided by residues 28-36 (IGSGNFGVA) and K51. D141 serves as the catalytic Proton acceptor.

This sequence belongs to the protein kinase superfamily. Ser/Thr protein kinase family. As to quaternary structure, interacts with ABI1. Interacts with I-2 and TOPP1. Interacts with FREE1 (via C-terminus). Autophosphorylated in vitro. Expressed at low levels in seeds, seedlings, roots (especially in tips), stems, leaves, shoots, flowers and siliques.

It carries out the reaction L-seryl-[protein] + ATP = O-phospho-L-seryl-[protein] + ADP + H(+). It catalyses the reaction L-threonyl-[protein] + ATP = O-phospho-L-threonyl-[protein] + ADP + H(+). Its activity is regulated as follows. Activated by autophosphorylation of its activation loop. Its function is as follows. Together with SRK2D, key component and activator of the abscisic acid (ABA) signaling pathway that regulates numerous ABA responses, such as seed germination, Pro accumulation, root growth inhibition, dormancy and seedling growth, and, to a lesser extent, stomatal closure. In response to ABA, phosphorylates the ESCRT-I complex component FREE1, which is required for ABA-induced FREE1 nuclear import. This chain is Serine/threonine-protein kinase SRK2I (SRK2I), found in Arabidopsis thaliana (Mouse-ear cress).